The chain runs to 332 residues: Large ribosomal subunit protein mL44 (332 aa).

Residues 1–30 (MASGLTRLLLRGPRCLLATAGLTLIPPVRG) constitute a mitochondrion transit peptide. One can recognise an RNase III domain in the interval 86-228 (DLLKTAFVNS…LITQMTGKEL (143 aa)). Residues 236–306 (NPMGLLVQEL…ARVALRKLYG (71 aa)) form the DRBM domain.

Belongs to the ribonuclease III family. Mitochondrion-specific ribosomal protein mL44 subfamily. As to quaternary structure, component of the mitochondrial ribosome large subunit (39S) which comprises a 16S rRNA and about 50 distinct proteins.

The protein localises to the mitochondrion. Its function is as follows. Component of the 39S subunit of mitochondrial ribosome. May have a function in the assembly/stability of nascent mitochondrial polypeptides exiting the ribosome. The sequence is that of Large ribosomal subunit protein mL44 (MRPL44) from Bos taurus (Bovine).